Consider the following 173-residue polypeptide: Mesencephalic astrocyte-derived neurotrophic factor homolog (173 aa).

The signal sequence occupies residues 1-22 (MKTWYMVVVIGFLATLAQTSLA). Intrachain disulfides connect cysteine 28-cysteine 114, cysteine 31-cysteine 103, cysteine 61-cysteine 72, and cysteine 148-cysteine 151.

Belongs to the ARMET family.

It is found in the secreted. Its function is as follows. Required during the maturation of the embryonic nervous system for maintenance of neuronal and cuticular connectivity. Essential for maintenance of dopaminergic neurons and dopamine levels. This Drosophila erecta (Fruit fly) protein is Mesencephalic astrocyte-derived neurotrophic factor homolog.